The primary structure comprises 620 residues: Two-component response regulator ORR27 (620 aa).

Residues 24–138 (HVLVVDDDAA…AIKFIWKHVL (115 aa)) enclose the Response regulatory domain. Position 76 is a 4-aspartylphosphate (D76). Disordered stretches follow at residues 171–197 (PPAV…AELS) and 215–257 (VWSS…LEAT). Residues 261–321 (KKVRTRFTWT…HLQKYRSWLE (61 aa)) constitute a DNA-binding region (myb-like GARP). A compositionally biased stretch (polar residues) spans 431-456 (SVSRDAHENGNSQARGSAMSNGTSGT). 3 disordered regions span residues 431-457 (SVSR…SGTR), 501-523 (SDQN…NSKT), and 596-620 (PPRG…SSGP). Positions 603–620 (EIASHENTNGKNGASSGP) are enriched in polar residues.

This sequence belongs to the ARR family. Type-B subfamily. Post-translationally, two-component system major event consists of a His-to-Asp phosphorelay between a sensor histidine kinase (HK) and a response regulator (RR). In plants, the His-to-Asp phosphorelay involves an additional intermediate named Histidine-containing phosphotransfer protein (HPt). This multistep phosphorelay consists of a His-Asp-His-Asp sequential transfer of a phosphate group between first a His and an Asp of the HK protein, followed by the transfer to a conserved His of the HPt protein and finally the transfer to an Asp in the receiver domain of the RR protein.

It is found in the nucleus. In terms of biological role, transcriptional activator that binds specific DNA sequence. Functions as a response regulator involved in His-to-Asp phosphorelay signal transduction system. Phosphorylation of the Asp residue in the receiver domain activates the ability of the protein to promote the transcription of target genes. May directly activate some type-A response regulators in response to cytokinins. This chain is Two-component response regulator ORR27, found in Oryza sativa subsp. japonica (Rice).